The sequence spans 335 residues: Probable cytosolic iron-sulfur protein assembly protein Ciao1 (335 aa).

WD repeat units lie at residues 12–51 (GHKGRIWGVAWHPKGNTFASCGEDKAIRIWSLSGNSWSTK), 57–96 (GHKRTIREIRWSPCGQYLASASFDATTAIWSKSSGEFECN), 101–140 (GHENEVKSVSWSKSGGLLATCSRDKSVWIWEVAGDDEFEC), 146–185 (PHTQDVKRVVWHPTKEILASASYDNTIKMFAESALDSDWD), 192–231 (SHTSTVWSIDFDADGERLVSCSDDTTLKIWRAYHPGNDAG), 250–289 (QHSRAIYDVSWCKLTGLIATACGDDGIRIFKESSDSKRDE), and 301–335 (AHEQDVNSVEWNPVMAGQLISCSDDGTIKIWKMLD).

The protein belongs to the WD repeat CIA1 family.

In terms of biological role, essential component of the cytosolic iron-sulfur (Fe/S) protein assembly machinery. Required for the maturation of extramitochondrial Fe/S proteins. The sequence is that of Probable cytosolic iron-sulfur protein assembly protein Ciao1 from Drosophila willistoni (Fruit fly).